We begin with the raw amino-acid sequence, 156 residues long: Probable succinate transporter subunit YjjB (156 aa).

4 helical membrane-spanning segments follow: residues 7–27, 54–74, 86–106, and 128–148; these read WALLQDMALAAVPALGFAMVF, FGMNIEWASFLAAILIGIIGI, VFTVAAVIPMFPGISAYTAMI, and FLKASFIVGALSIGLSLPGIW.

It belongs to the ThrE exporter (TC 2.A.79) family. The transporter is composed of YjjB and YjjP.

The protein resides in the cell inner membrane. Functionally, involved in succinate export with YjjP. Both proteins are required for export. The polypeptide is Probable succinate transporter subunit YjjB (Pectobacterium carotovorum subsp. carotovorum (strain PC1)).